Reading from the N-terminus, the 143-residue chain is SsrA-binding protein (143 aa).

It belongs to the SmpB family.

The protein localises to the cytoplasm. Its function is as follows. Required for rescue of stalled ribosomes mediated by trans-translation. Binds to transfer-messenger RNA (tmRNA), required for stable association of tmRNA with ribosomes. tmRNA and SmpB together mimic tRNA shape, replacing the anticodon stem-loop with SmpB. tmRNA is encoded by the ssrA gene; the 2 termini fold to resemble tRNA(Ala) and it encodes a 'tag peptide', a short internal open reading frame. During trans-translation Ala-aminoacylated tmRNA acts like a tRNA, entering the A-site of stalled ribosomes, displacing the stalled mRNA. The ribosome then switches to translate the ORF on the tmRNA; the nascent peptide is terminated with the 'tag peptide' encoded by the tmRNA and targeted for degradation. The ribosome is freed to recommence translation, which seems to be the essential function of trans-translation. This chain is SsrA-binding protein, found in Mycoplasmoides gallisepticum (strain R(low / passage 15 / clone 2)) (Mycoplasma gallisepticum).